We begin with the raw amino-acid sequence, 185 residues long: Ribosome-recycling factor (185 aa).

The protein belongs to the RRF family.

The protein localises to the cytoplasm. Its function is as follows. Responsible for the release of ribosomes from messenger RNA at the termination of protein biosynthesis. May increase the efficiency of translation by recycling ribosomes from one round of translation to another. The protein is Ribosome-recycling factor of Rhodospirillum centenum (strain ATCC 51521 / SW).